The primary structure comprises 409 residues: Magnesium-protoporphyrin IX monomethyl ester [oxidative] cyclase, chloroplastic (409 aa).

2 disordered regions span residues 1-23 (MAAE…SNPS) and 36-60 (RMSA…TKKE). Residues 1–36 (MAAEMALVKPISKFSSPKLSNPSKFLSGRRFSTVIR) constitute a chloroplast transit peptide. A compositionally biased stretch (polar residues) spans 13–23 (KFSSPKLSNPS).

Belongs to the AcsF family. In terms of assembly, part of the FLU-containing chloroplast membrane complex composed of FLU, CRD1, PORB, PORC, CHLP and HEMA1. Interacts with YCF54 in chloroplasts. Fe cation is required as a cofactor.

The protein resides in the plastid. It localises to the chloroplast inner membrane. Its subcellular location is the chloroplast thylakoid membrane. It catalyses the reaction Mg-protoporphyrin IX 13-monomethyl ester + 3 NADPH + 3 O2 + 2 H(+) = 3,8-divinyl protochlorophyllide a + 3 NADP(+) + 5 H2O. It functions in the pathway porphyrin-containing compound metabolism; chlorophyll biosynthesis. Its function is as follows. Catalytic component of the MgProto monomethylester (MgProtoME) cyclase complex that catalyzes the formation of the isocyclic ring in chlorophyll biosynthesis. Mediates the cyclase reaction, which results in the formation of divinylprotochlorophyllide (Pchlide) characteristic of all chlorophylls from magnesium-protoporphyrin IX 13-monomethyl ester (MgPMME). In Arabidopsis thaliana (Mouse-ear cress), this protein is Magnesium-protoporphyrin IX monomethyl ester [oxidative] cyclase, chloroplastic.